The sequence spans 707 residues: Polyribonucleotide nucleotidyltransferase (707 aa).

2 residues coordinate Mg(2+): Asp485 and Asp491. The 60-residue stretch at 552–611 (PRIYTMKIDPKKIKDVIGKGGATIRTLTEETGTSIDIDDDGTVKIAAIDGNAVKEVMARI) folds into the KH domain. One can recognise an S1 motif domain in the interval 621-689 (GAVYTGKVTR…RQGRIRLTMK (69 aa)).

This sequence belongs to the polyribonucleotide nucleotidyltransferase family. In terms of assembly, component of the RNA degradosome, which is a multiprotein complex involved in RNA processing and mRNA degradation. Mg(2+) serves as cofactor.

It is found in the cytoplasm. The catalysed reaction is RNA(n+1) + phosphate = RNA(n) + a ribonucleoside 5'-diphosphate. Functionally, involved in mRNA degradation. Catalyzes the phosphorolysis of single-stranded polyribonucleotides processively in the 3'- to 5'-direction. This is Polyribonucleotide nucleotidyltransferase from Actinobacillus succinogenes (strain ATCC 55618 / DSM 22257 / CCUG 43843 / 130Z).